The sequence spans 444 residues: Beta-D-glucosyl crocetin beta-1,6-glucosyltransferase (444 aa).

H9 serves as the catalytic Proton acceptor. H9 lines the an anthocyanidin pocket. Catalysis depends on D108, which acts as the Charge relay. T130, A319, Q321, H336, W339, N340, S341, E344, D360, and Q361 together coordinate UDP-alpha-D-glucose.

Belongs to the UDP-glycosyltransferase family. As to expression, ubiquitous.

It carries out the reaction beta-D-glucosyl crocetin + UDP-alpha-D-glucose = beta-D-gentiobiosyl crocetin + UDP + H(+). It catalyses the reaction bis(beta-D-glucosyl) crocetin + UDP-alpha-D-glucose = beta-D-gentiobiosyl beta-D-glucosyl crocetin + UDP + H(+). The enzyme catalyses beta-D-gentiobiosyl beta-D-glucosyl crocetin + UDP-alpha-D-glucose = bis(beta-D-gentiobiosyl) crocetin + UDP + H(+). Its function is as follows. Glucosyltransferase catalyzing the beta 1-6 glucosylation of the sugar moiety of crocetin glucosyl esters to produce crocetin gentiobiosyl esters. Weak activity toward curcumin glucosides, but no activity with flavonoid glucosides, coumarin glucosides, 4-nitrophenyl glucoside or crocetin. Involved with UGT75L6 in sequential glycosylation of crocetin to crocin (bis(beta-D-gentiobiosyl) crocetin). The sequence is that of Beta-D-glucosyl crocetin beta-1,6-glucosyltransferase (UGT94E5) from Gardenia jasminoides (Cape jasmine).